The sequence spans 173 residues: Glutamyl-tRNA(Gln) amidotransferase subunit C, mitochondrial (173 aa).

This sequence belongs to the GatC family. In terms of assembly, subunit of the heterotrimeric GatCAB amidotransferase (AdT) complex, composed of A, B and C subunits.

The protein localises to the mitochondrion. The enzyme catalyses L-glutamyl-tRNA(Gln) + L-glutamine + ATP + H2O = L-glutaminyl-tRNA(Gln) + L-glutamate + ADP + phosphate + H(+). Allows the formation of correctly charged Gln-tRNA(Gln) through the transamidation of misacylated Glu-tRNA(Gln) in the mitochondria. The reaction takes place in the presence of glutamine and ATP through an activated gamma-phospho-Glu-tRNA(Gln). The sequence is that of Glutamyl-tRNA(Gln) amidotransferase subunit C, mitochondrial from Drosophila persimilis (Fruit fly).